Here is a 379-residue protein sequence, read N- to C-terminus: Anhydro-N-acetylmuramic acid kinase (379 aa).

9–16 contributes to the ATP binding site; it reads GTSVDGID.

The protein belongs to the anhydro-N-acetylmuramic acid kinase family.

The catalysed reaction is 1,6-anhydro-N-acetyl-beta-muramate + ATP + H2O = N-acetyl-D-muramate 6-phosphate + ADP + H(+). The protein operates within amino-sugar metabolism; 1,6-anhydro-N-acetylmuramate degradation. It functions in the pathway cell wall biogenesis; peptidoglycan recycling. Functionally, catalyzes the specific phosphorylation of 1,6-anhydro-N-acetylmuramic acid (anhMurNAc) with the simultaneous cleavage of the 1,6-anhydro ring, generating MurNAc-6-P. Is required for the utilization of anhMurNAc either imported from the medium or derived from its own cell wall murein, and thus plays a role in cell wall recycling. The sequence is that of Anhydro-N-acetylmuramic acid kinase from Acaryochloris marina (strain MBIC 11017).